The primary structure comprises 178 residues: MPALLFYLLGFCLLQGQVTGRVTYEWMMENVKICRNDFVRTAIEVCGHVHLERESPSPENPFLSSGPAAETVPSSIKKDAENANTMLESIPNLPQELTATLFEKQPSKLYLQYLPTLKKSNVSFEEFKKIIQNIQRGVQGSSASESNTFSRKKRQFSESLPEECCKYGCPRYYLLMYC.

The signal sequence occupies residues 1–20 (MPALLFYLLGFCLLQGQVTG). Intrachain disulfides connect C34-C165, C46-C178, and C164-C169. Positions 54-150 (ESPSPENPFL…SSASESNTFS (97 aa)) are cleaved as a propeptide — connecting peptide.

The protein belongs to the insulin family. In terms of assembly, heterodimer of a B chain and an A chain linked by two disulfide bonds.

The protein localises to the secreted. This chain is Relaxin-like protein SQ10, found in Oryctolagus cuniculus (Rabbit).